The chain runs to 414 residues: Schlafen-like protein 1 (414 aa).

Positions 141–203 (LHHREQDDSG…ISQNRPSGVR (63 aa)) are disordered. Over residues 154-185 (SHSPGPSPGPSPGPSPGFRRPPLPQLADPPPN) the composition is skewed to pro residues. 268–275 (GVEDSGLV) serves as a coordination point for ATP. Residues 373 to 407 (RQKWTAELSKLEEKVDVLTLEKEQLQEQLRQRQTL) are a coiled coil.

Belongs to the Schlafen family. Subgroup I subfamily.

This is Schlafen-like protein 1 (Slfnl1) from Rattus norvegicus (Rat).